Reading from the N-terminus, the 218-residue chain is Large ribosomal subunit protein bL25 (218 aa).

Residues 178–218 (VTPPTVTEDPDATEEDNTTAESVEATGERNDDNLDRPGRVE) are disordered. Over residues 185–195 (EDPDATEEDNT) the composition is skewed to acidic residues. Residues 203-218 (TGERNDDNLDRPGRVE) are compositionally biased toward basic and acidic residues.

This sequence belongs to the bacterial ribosomal protein bL25 family. CTC subfamily. Part of the 50S ribosomal subunit; part of the 5S rRNA/L5/L18/L25 subcomplex. Contacts the 5S rRNA. Binds to the 5S rRNA independently of L5 and L18.

In terms of biological role, this is one of the proteins that binds to the 5S RNA in the ribosome where it forms part of the central protuberance. The sequence is that of Large ribosomal subunit protein bL25 from Shouchella clausii (strain KSM-K16) (Alkalihalobacillus clausii).